The primary structure comprises 86 residues: uncharacterized protein (86 aa).

TPR repeat units follow at residues 8 to 41 (AEYYYKKGVEVGNKGDVEKALEYFNKAIELNPFY) and 42 to 75 (RDAWFNKALALRILGRYEEARECFFRGLAVEKHL).

This is an uncharacterized protein from Methanocaldococcus jannaschii (strain ATCC 43067 / DSM 2661 / JAL-1 / JCM 10045 / NBRC 100440) (Methanococcus jannaschii).